Here is a 529-residue protein sequence, read N- to C-terminus: Bifunctional purine biosynthesis protein PurH (529 aa).

The region spanning 1-148 is the MGS-like domain; sequence MQQRRPVRRA…KNHKDVAIVV (148 aa).

Belongs to the PurH family.

It carries out the reaction (6R)-10-formyltetrahydrofolate + 5-amino-1-(5-phospho-beta-D-ribosyl)imidazole-4-carboxamide = 5-formamido-1-(5-phospho-D-ribosyl)imidazole-4-carboxamide + (6S)-5,6,7,8-tetrahydrofolate. It catalyses the reaction IMP + H2O = 5-formamido-1-(5-phospho-D-ribosyl)imidazole-4-carboxamide. The protein operates within purine metabolism; IMP biosynthesis via de novo pathway; 5-formamido-1-(5-phospho-D-ribosyl)imidazole-4-carboxamide from 5-amino-1-(5-phospho-D-ribosyl)imidazole-4-carboxamide (10-formyl THF route): step 1/1. It functions in the pathway purine metabolism; IMP biosynthesis via de novo pathway; IMP from 5-formamido-1-(5-phospho-D-ribosyl)imidazole-4-carboxamide: step 1/1. This is Bifunctional purine biosynthesis protein PurH from Salmonella paratyphi A (strain ATCC 9150 / SARB42).